A 239-amino-acid chain; its full sequence is Purine nucleoside phosphorylase DeoD-type (239 aa).

His-5 serves as a coordination point for a purine D-ribonucleoside. Phosphate is bound by residues Gly-21, Arg-25, Arg-44, and 88–91 (RVGS). A purine D-ribonucleoside is bound by residues 180–182 (EME) and 204–205 (SD). Asp-205 functions as the Proton donor in the catalytic mechanism.

This sequence belongs to the PNP/UDP phosphorylase family. In terms of assembly, homohexamer; trimer of homodimers.

The catalysed reaction is a purine D-ribonucleoside + phosphate = a purine nucleobase + alpha-D-ribose 1-phosphate. It catalyses the reaction a purine 2'-deoxy-D-ribonucleoside + phosphate = a purine nucleobase + 2-deoxy-alpha-D-ribose 1-phosphate. Its function is as follows. Catalyzes the reversible phosphorolytic breakdown of the N-glycosidic bond in the beta-(deoxy)ribonucleoside molecules, with the formation of the corresponding free purine bases and pentose-1-phosphate. The polypeptide is Purine nucleoside phosphorylase DeoD-type (Yersinia pestis bv. Antiqua (strain Antiqua)).